Here is a 188-residue protein sequence, read N- to C-terminus: Elongation factor P (188 aa).

It belongs to the elongation factor P family.

It localises to the cytoplasm. The protein operates within protein biosynthesis; polypeptide chain elongation. In terms of biological role, involved in peptide bond synthesis. Stimulates efficient translation and peptide-bond synthesis on native or reconstituted 70S ribosomes in vitro. Probably functions indirectly by altering the affinity of the ribosome for aminoacyl-tRNA, thus increasing their reactivity as acceptors for peptidyl transferase. The sequence is that of Elongation factor P from Pseudomonas aeruginosa (strain LESB58).